A 139-amino-acid chain; its full sequence is ATP synthase epsilon chain (139 aa).

Belongs to the ATPase epsilon chain family. In terms of assembly, F-type ATPases have 2 components, CF(1) - the catalytic core - and CF(0) - the membrane proton channel. CF(1) has five subunits: alpha(3), beta(3), gamma(1), delta(1), epsilon(1). CF(0) has three main subunits: a, b and c.

The protein resides in the cell inner membrane. In terms of biological role, produces ATP from ADP in the presence of a proton gradient across the membrane. The sequence is that of ATP synthase epsilon chain from Marinomonas sp. (strain MWYL1).